Consider the following 159-residue polypeptide: Ribosomal RNA large subunit methyltransferase H (159 aa).

S-adenosyl-L-methionine-binding positions include L76, G108, and 127–132 (FGQLTL).

This sequence belongs to the RNA methyltransferase RlmH family. Homodimer.

The protein localises to the cytoplasm. The enzyme catalyses pseudouridine(1915) in 23S rRNA + S-adenosyl-L-methionine = N(3)-methylpseudouridine(1915) in 23S rRNA + S-adenosyl-L-homocysteine + H(+). Functionally, specifically methylates the pseudouridine at position 1915 (m3Psi1915) in 23S rRNA. The chain is Ribosomal RNA large subunit methyltransferase H from Streptococcus suis (strain 05ZYH33).